The chain runs to 690 residues: MNAQTQASKNALHKSLERRHNASTSLAALWRPALLQAFVKLDPRQLLRSPVMLVVELTAVLTTLLCFVPDQAVPTSVALQIALWLWFTVLFANFAEALAEGRGKARADSLKAGSQGLSANKRRADGSFESVVASSLRKGDVVRVQAGEMIPGDGEVIEGVAAVNEAAITGESAPVIRESGGDRSAVTGNTQVVSDWLLVRIGANPGESTLDRMIALVEGAKRQKTPNEVALDILLIGLTLIFLLVVVTLKPFALFAGGNLPLVFLVALLVTLIPTTIGGLLSAIGIAGMDRLVRLNVIAKSGRAVEAAGDVHVLLLDKTGTITFGNRRCSALYAAPGVSGKELAEGALLASLADDTPEGKSIVEYLRILHPIEEPRREELTPIAFSAETRLSGVDWNGQVYRKGAVDAALRFIDLPREKMPEVLSREVDKIAQSGGTPLLVVANGRLLGAIHLKDVVKPGIRERFAELRRLGIRTVMVTGDNPLTAAAIAAEAGVDDVIAEATPEKKLARIRQEQGEGRLVAMCGDGANDAPALAQADVGMAMNDGTQAAREAANLVDLDSDPTKLLDVVQVGKELLVTRGALTTFSIANDVAKYFAILPALFVGIYPQLDVLNVMRLQSPQSAILSAIVFNALIIVALIPLALRGVRVQAADASQLLQRNLLIYGVGGLVAPFLGIKAIDLLLTAVGLA.

4 helical membrane-spanning segments follow: residues 49–69 (SPVM…CFVP), 72–92 (AVPT…VLFA), 229–249 (VALD…VVTL), and 253–273 (ALFA…VTLI). The active-site 4-aspartylphosphate intermediate is aspartate 317. ATP is bound by residues aspartate 354, glutamate 358, 385-392 (FSAETRLS), and lysine 403. Mg(2+)-binding residues include aspartate 526 and aspartate 530. Transmembrane regions (helical) follow at residues 596–616 (FAIL…LNVM), 624–644 (AILS…PLAL), and 662–682 (LLIY…AIDL).

It belongs to the cation transport ATPase (P-type) (TC 3.A.3) family. Type IA subfamily. In terms of assembly, the system is composed of three essential subunits: KdpA, KdpB and KdpC.

It localises to the cell inner membrane. The enzyme catalyses K(+)(out) + ATP + H2O = K(+)(in) + ADP + phosphate + H(+). Part of the high-affinity ATP-driven potassium transport (or Kdp) system, which catalyzes the hydrolysis of ATP coupled with the electrogenic transport of potassium into the cytoplasm. This subunit is responsible for energy coupling to the transport system and for the release of the potassium ions to the cytoplasm. This Pseudomonas aeruginosa (strain ATCC 15692 / DSM 22644 / CIP 104116 / JCM 14847 / LMG 12228 / 1C / PRS 101 / PAO1) protein is Potassium-transporting ATPase ATP-binding subunit.